We begin with the raw amino-acid sequence, 46 residues long: Defensin Tk-AMP-D5 (46 aa).

Disulfide bonds link cysteine 3–cysteine 46, cysteine 14–cysteine 34, cysteine 20–cysteine 40, and cysteine 24–cysteine 42.

Functionally, plant defense peptide. The polypeptide is Defensin Tk-AMP-D5 (Triticum kiharae (Wheat)).